The chain runs to 344 residues: Dihydroorotase (344 aa).

H13 and H15 together coordinate Zn(2+). Residues 15–17 and N41 each bind substrate; that span reads HLR. The Zn(2+) site is built by K99, H136, and H174. K99 bears the N6-carboxylysine mark. A substrate-binding site is contributed by H136. L219 is a substrate binding site. D247 provides a ligand contact to Zn(2+). D247 is an active-site residue. Positions 251 and 263 each coordinate substrate.

This sequence belongs to the metallo-dependent hydrolases superfamily. DHOase family. Class II DHOase subfamily. Homodimer. Zn(2+) is required as a cofactor.

The catalysed reaction is (S)-dihydroorotate + H2O = N-carbamoyl-L-aspartate + H(+). It functions in the pathway pyrimidine metabolism; UMP biosynthesis via de novo pathway; (S)-dihydroorotate from bicarbonate: step 3/3. In terms of biological role, catalyzes the reversible cyclization of carbamoyl aspartate to dihydroorotate. In Acinetobacter baumannii (strain AB307-0294), this protein is Dihydroorotase.